The following is a 141-amino-acid chain: Galactose-6-phosphate isomerase subunit LacA (141 aa).

This sequence belongs to the LacAB/RpiB family. Heteromultimeric protein consisting of LacA and LacB.

The enzyme catalyses aldehydo-D-galactose 6-phosphate = keto-D-tagatose 6-phosphate. It participates in carbohydrate metabolism; D-galactose 6-phosphate degradation; D-tagatose 6-phosphate from D-galactose 6-phosphate: step 1/1. The polypeptide is Galactose-6-phosphate isomerase subunit LacA (Streptococcus pneumoniae (strain 70585)).